Here is a 573-residue protein sequence, read N- to C-terminus: DNA ligase (573 aa).

Glu-250 contacts ATP. The active-site N6-AMP-lysine intermediate is the Lys-252. 6 residues coordinate ATP: Arg-257, Arg-272, Glu-301, Phe-342, Arg-432, and Lys-438.

It belongs to the ATP-dependent DNA ligase family. It depends on Mg(2+) as a cofactor.

It carries out the reaction ATP + (deoxyribonucleotide)n-3'-hydroxyl + 5'-phospho-(deoxyribonucleotide)m = (deoxyribonucleotide)n+m + AMP + diphosphate.. DNA ligase that seals nicks in double-stranded DNA during DNA replication, DNA recombination and DNA repair. The sequence is that of DNA ligase from Methanococcus maripaludis (strain C5 / ATCC BAA-1333).